The chain runs to 290 residues: MVIQKEKKSCGQVVEEWKEFVWNPRTHQFMGRTGTSWAFILLFYLVFYGFLTAMFTLTMWVMLQTVSDHTPKYQDRLATPGLMIRPKTENLDVIVNVSDTESWDQHVQKLNKFLEPYNDSIQAQKNDVCRPGRYYEQPDNGVLNYPKRACQFNRTQLGNCSGIGDSTHYGYSTGQPCVFIKMNRVINFYAGANQSMNVTCAGKRDEDAENLGNFVMFPANGNIDLMYFPYYGKKFHVNYTQPLVAVKFLNVTPNVEVNVECRINAANIATDDERDKFAGRVAFKLRINKT.

Topologically, residues 1 to 39 (MVIQKEKKSCGQVVEEWKEFVWNPRTHQFMGRTGTSWAF) are cytoplasmic. The helical; Signal-anchor for type II membrane protein transmembrane segment at 40–67 (ILLFYLVFYGFLTAMFTLTMWVMLQTVS) threads the bilayer. At 68-290 (DHTPKYQDRL…VAFKLRINKT (223 aa)) the chain is on the extracellular side. N-linked (GlcNAc...) asparagine glycans are attached at residues N96 and N118. C129 and C150 are disulfide-bonded. N153 and N159 each carry an N-linked (GlcNAc...) asparagine glycan. C160 and C177 are joined by a disulfide. N-linked (GlcNAc...) asparagine glycans are attached at residues N193, N197, and N238. The interval 193 to 290 (NQSMNVTCAG…VAFKLRINKT (98 aa)) is immunoglobulin-like. A disulfide bridge links C200 with C261.

It belongs to the X(+)/potassium ATPases subunit beta family. The sodium/potassium-transporting ATPase is composed of a catalytic alpha subunit, an auxiliary non-catalytic beta subunit and an additional regulatory subunit. Interacts with isoform 2 of BSG.

The protein localises to the cell membrane. In terms of biological role, this is the non-catalytic component of the active enzyme, which catalyzes the hydrolysis of ATP coupled with the exchange of Na(+) and K(+) ions across the plasma membrane. The exact function of the beta-2 subunit is not known. Functionally, mediates cell adhesion of neurons and astrocytes, and promotes neurite outgrowth. The polypeptide is Sodium/potassium-transporting ATPase subunit beta-2 (ATP1B2) (Homo sapiens (Human)).